A 91-amino-acid polypeptide reads, in one-letter code: N(2)-fixation sustaining protein CowN (91 aa).

This sequence belongs to the CowN family.

Its function is as follows. Is required to sustain N(2)-dependent growth in the presence of low levels of carbon monoxide (CO). Probably acts by protecting the N(2) fixation ability of the nitrogenase complex, which is inactivated in the presence of CO. The protein is N(2)-fixation sustaining protein CowN of Beijerinckia indica subsp. indica (strain ATCC 9039 / DSM 1715 / NCIMB 8712).